A 1240-amino-acid chain; its full sequence is Selection and upkeep of intraepithelial T-cells protein 6 (1240 aa).

The first 24 residues, 1 to 24 (MGTIGVPLTAHCVVLFLLQMVALS), serve as a signal peptide directing secretion. At 25 to 1086 (TEQFTVNGLE…CNKRNPFWKK (1062 aa)) the chain is on the extracellular side. Residues 26-141 (EQFTVNGLES…EEHIIEVKVT (116 aa)) enclose the Ig-like V-type domain. The cysteines at positions 49 and 123 are disulfide-linked. In terms of domain architecture, Ig-like C1-type spans 142–231 (ATSSDIQILM…FVTHQEESIS (90 aa)). N-linked (GlcNAc...) asparagine glycosylation is found at asparagine 155, asparagine 200, and asparagine 314. Cysteine 163 and cysteine 217 form a disulfide bridge. Residues 1087–1107 (HALDLGISVFAIIVVTLIRHL) form a helical membrane-spanning segment. At 1108 to 1125 (NQREADQHFELDTLWSKD) the chain is on the cytoplasmic side. The helical transmembrane segment at 1126–1146 (TSVILCVLIMFNNRLKALIYF) threads the bilayer. At 1147–1167 (RLYGYSPPGKTYKYIVNYILR) the chain is on the extracellular side. Residues 1168–1188 (FSQPLFFIVYSAIILVMHLQI) traverse the membrane as a helical segment. Residues 1189 to 1205 (QNTDSLFSLYNSWMVEM) lie on the Cytoplasmic side of the membrane. The chain crosses the membrane as a helical span at residues 1206–1226 (IMVLGLLLAIFNVKNIATALL). The Extracellular segment spans residues 1227 to 1240 (HLGRTTLRLFRIKD).

It belongs to the SKINT family. As to expression, expressed in skin.

Its subcellular location is the membrane. Functionally, may act by engaging a cell surface molecule on immature T-cells in the embryonic thymus. The protein is Selection and upkeep of intraepithelial T-cells protein 6 (Skint6) of Mus musculus (Mouse).